Consider the following 375-residue polypeptide: Response regulator aspartate phosphatase E (375 aa).

A coiled-coil region spans residues 24–95 (NVTDAEMLKA…HKKKLDNMRA (72 aa)). 6 TPR repeats span residues 96–129 (YYYNFFRGMYEFRNGEYTRAITYYKKAERKIPTI), 177–210 (IQCHFVIAGNYDDLENHEKALPHLQEALKGAELL), 219–252 (ATAFFNLGNCYHKMDNLNKAARYIEQALVQYRKI), 258–291 (PQAYHDLALIYFKQGKKEQAMDCFRKGIRSAVDF), 297–330 (MNLFEALDVLYIRNGDTPKLLNIFSRLENGKGYP), and 333–366 (EELALLGGNLFDYNGKIEDSIICFKKMVYAQKQI).

Belongs to the Rap family.

It localises to the cytoplasm. With respect to regulation, phosphatase activity is inhibited by the phosphatase regulator PhrE. Its function is as follows. Involved in the regulation of sporulation. Acts as a phosphatase that specifically dephosphorylates the sporulation initiation phosphotransferase Spo0F and inhibits its activity. Probably plays a dispensable role in the overall context of sporulation initiation. The chain is Response regulator aspartate phosphatase E (rapE) from Bacillus subtilis (strain 168).